Here is a 57-residue protein sequence, read N- to C-terminus: UPF0391 membrane protein azo1765 (57 aa).

2 helical membrane passes run 1 to 21 (MIKW…FGFT) and 33 to 53 (VLFF…VGLG).

It belongs to the UPF0391 family.

Its subcellular location is the cell membrane. The polypeptide is UPF0391 membrane protein azo1765 (Azoarcus sp. (strain BH72)).